The chain runs to 368 residues: tRNA-specific 2-thiouridylase MnmA (368 aa).

ATP contacts are provided by residues 11–18 (GMSGGVDS) and Met37. Positions 97–99 (NPD) are interaction with target base in tRNA. Cys102 serves as the catalytic Nucleophile. Cys102 and Cys199 are joined by a disulfide. Gly127 contacts ATP. The interval 149–151 (KDQ) is interaction with tRNA. The active-site Cysteine persulfide intermediate is Cys199. The tract at residues 311 to 312 (RY) is interaction with tRNA.

Belongs to the MnmA/TRMU family. Interacts with TusE.

It localises to the cytoplasm. The enzyme catalyses S-sulfanyl-L-cysteinyl-[protein] + uridine(34) in tRNA + AH2 + ATP = 2-thiouridine(34) in tRNA + L-cysteinyl-[protein] + A + AMP + diphosphate + H(+). Its function is as follows. Catalyzes the 2-thiolation of uridine at the wobble position (U34) of tRNA(Lys), tRNA(Glu) and tRNA(Gln), leading to the formation of s(2)U34, the first step of tRNA-mnm(5)s(2)U34 synthesis. Sulfur is provided by IscS, via a sulfur-relay system. Binds ATP and its substrate tRNAs. In Shigella boydii serotype 18 (strain CDC 3083-94 / BS512), this protein is tRNA-specific 2-thiouridylase MnmA.